The chain runs to 522 residues: Maturase K (522 aa).

It belongs to the intron maturase 2 family. MatK subfamily.

Its subcellular location is the plastid. The protein resides in the chloroplast. Usually encoded in the trnK tRNA gene intron. Probably assists in splicing its own and other chloroplast group II introns. The sequence is that of Maturase K from Sapindus saponaria (Soapberry).